The following is a 197-amino-acid chain: Gene 49 protein (197 aa).

2 disordered regions span residues Met1–Pro49 and Phe114–Lys157. The segment covering Leu117–Gln135 has biased composition (gly residues). The span at Gln136–Gln146 shows a compositional bias: low complexity.

The protein is Gene 49 protein (49) of Mycobacterium phage D29 (Mycobacteriophage D29).